Here is a 388-residue protein sequence, read N- to C-terminus: Succinate--CoA ligase [ADP-forming] subunit beta (388 aa).

An ATP-grasp domain is found at 9-244; sequence KQLFARYGMP…PSQEDAREAH (236 aa). ATP contacts are provided by residues lysine 46, 53–55, glutamate 99, threonine 102, and glutamate 107; that span reads GRG. Residues asparagine 199 and aspartate 213 each coordinate Mg(2+). Residues asparagine 264 and 321–323 contribute to the substrate site; that span reads GIV.

Belongs to the succinate/malate CoA ligase beta subunit family. Heterotetramer of two alpha and two beta subunits. Mg(2+) serves as cofactor.

The enzyme catalyses succinate + ATP + CoA = succinyl-CoA + ADP + phosphate. It carries out the reaction GTP + succinate + CoA = succinyl-CoA + GDP + phosphate. Its pathway is carbohydrate metabolism; tricarboxylic acid cycle; succinate from succinyl-CoA (ligase route): step 1/1. Functionally, succinyl-CoA synthetase functions in the citric acid cycle (TCA), coupling the hydrolysis of succinyl-CoA to the synthesis of either ATP or GTP and thus represents the only step of substrate-level phosphorylation in the TCA. The beta subunit provides nucleotide specificity of the enzyme and binds the substrate succinate, while the binding sites for coenzyme A and phosphate are found in the alpha subunit. In Yersinia pseudotuberculosis serotype O:1b (strain IP 31758), this protein is Succinate--CoA ligase [ADP-forming] subunit beta.